Here is a 466-residue protein sequence, read N- to C-terminus: Phosphoenolpyruvate carboxykinase (ATP) (466 aa).

Residues Arg61, Tyr196, and Lys202 each coordinate substrate. ATP-binding positions include Lys202, His221, and 237-245 (GLSGTGKTT). Mn(2+)-binding residues include Lys202 and His221. Asp258 contributes to the Mn(2+) binding site. ATP is bound by residues Glu286, Arg323, and Thr448. Arg323 is a substrate binding site.

This sequence belongs to the phosphoenolpyruvate carboxykinase (ATP) family. Mn(2+) is required as a cofactor.

It localises to the cytoplasm. The catalysed reaction is oxaloacetate + ATP = phosphoenolpyruvate + ADP + CO2. Its pathway is carbohydrate biosynthesis; gluconeogenesis. In terms of biological role, involved in the gluconeogenesis. Catalyzes the conversion of oxaloacetate (OAA) to phosphoenolpyruvate (PEP) through direct phosphoryl transfer between the nucleoside triphosphate and OAA. In Deinococcus radiodurans (strain ATCC 13939 / DSM 20539 / JCM 16871 / CCUG 27074 / LMG 4051 / NBRC 15346 / NCIMB 9279 / VKM B-1422 / R1), this protein is Phosphoenolpyruvate carboxykinase (ATP).